Here is a 430-residue protein sequence, read N- to C-terminus: Glutamate-1-semialdehyde 2,1-aminomutase (430 aa).

The residue at position 266 (K266) is an N6-(pyridoxal phosphate)lysine.

This sequence belongs to the class-III pyridoxal-phosphate-dependent aminotransferase family. HemL subfamily. In terms of assembly, homodimer. It depends on pyridoxal 5'-phosphate as a cofactor.

Its subcellular location is the cytoplasm. It carries out the reaction (S)-4-amino-5-oxopentanoate = 5-aminolevulinate. It participates in porphyrin-containing compound metabolism; protoporphyrin-IX biosynthesis; 5-aminolevulinate from L-glutamyl-tRNA(Glu): step 2/2. The polypeptide is Glutamate-1-semialdehyde 2,1-aminomutase (Acidithiobacillus ferrooxidans (strain ATCC 23270 / DSM 14882 / CIP 104768 / NCIMB 8455) (Ferrobacillus ferrooxidans (strain ATCC 23270))).